Here is a 265-residue protein sequence, read N- to C-terminus: Hydroxyethylthiazole kinase (265 aa).

Met-55 serves as a coordination point for substrate. ATP contacts are provided by Arg-130 and Ser-176. Gly-203 provides a ligand contact to substrate.

The protein belongs to the Thz kinase family. Mg(2+) serves as cofactor.

It catalyses the reaction 5-(2-hydroxyethyl)-4-methylthiazole + ATP = 4-methyl-5-(2-phosphooxyethyl)-thiazole + ADP + H(+). The protein operates within cofactor biosynthesis; thiamine diphosphate biosynthesis; 4-methyl-5-(2-phosphoethyl)-thiazole from 5-(2-hydroxyethyl)-4-methylthiazole: step 1/1. Functionally, catalyzes the phosphorylation of the hydroxyl group of 4-methyl-5-beta-hydroxyethylthiazole (THZ). The sequence is that of Hydroxyethylthiazole kinase from Leptospira interrogans serogroup Icterohaemorrhagiae serovar copenhageni (strain Fiocruz L1-130).